A 549-amino-acid polypeptide reads, in one-letter code: Eukaryotic translation initiation factor 3 subunit D (549 aa).

A disordered region spans residues 101–130 (QSYQRGRARGQRGRGARGARTPGGMTTLNK). Positions 106-117 (GRARGQRGRGAR) are enriched in basic residues. The RNA gate stretch occupies residues 277–291 (EFDLLTVNETSVEPP). Positions 521-549 (ESDASEESGDEQADTPFAPLYSYGNSKRV) are disordered. A compositionally biased stretch (acidic residues) spans 523–533 (DASEESGDEQA).

This sequence belongs to the eIF-3 subunit D family. Component of the eukaryotic translation initiation factor 3 (eIF-3) complex.

The protein localises to the cytoplasm. Its function is as follows. mRNA cap-binding component of the eukaryotic translation initiation factor 3 (eIF-3) complex, which is involved in protein synthesis of a specialized repertoire of mRNAs and, together with other initiation factors, stimulates binding of mRNA and methionyl-tRNAi to the 40S ribosome. The eIF-3 complex specifically targets and initiates translation of a subset of mRNAs involved in cell proliferation. In the eIF-3 complex, eif3d specifically recognizes and binds the 7-methylguanosine cap of a subset of mRNAs. The protein is Eukaryotic translation initiation factor 3 subunit D of Bombyx mori (Silk moth).